Consider the following 275-residue polypeptide: 3-methyl-2-oxobutanoate hydroxymethyltransferase (275 aa).

Mg(2+)-binding residues include Asp-44 and Asp-83. Residues 44–45, Asp-83, and Lys-113 each bind 3-methyl-2-oxobutanoate; that span reads DS. Mg(2+) is bound at residue Glu-115. The active-site Proton acceptor is Glu-182.

This sequence belongs to the PanB family. In terms of assembly, homodecamer; pentamer of dimers. It depends on Mg(2+) as a cofactor.

The protein localises to the cytoplasm. It carries out the reaction 3-methyl-2-oxobutanoate + (6R)-5,10-methylene-5,6,7,8-tetrahydrofolate + H2O = 2-dehydropantoate + (6S)-5,6,7,8-tetrahydrofolate. It functions in the pathway cofactor biosynthesis; (R)-pantothenate biosynthesis; (R)-pantoate from 3-methyl-2-oxobutanoate: step 1/2. Its function is as follows. Catalyzes the reversible reaction in which hydroxymethyl group from 5,10-methylenetetrahydrofolate is transferred onto alpha-ketoisovalerate to form ketopantoate. The sequence is that of 3-methyl-2-oxobutanoate hydroxymethyltransferase from Clostridium botulinum (strain Alaska E43 / Type E3).